The following is a 57-amino-acid chain: UPF0391 membrane protein RHECIAT_CH0003936 (57 aa).

2 helical membrane passes run 4-24 and 33-53; these read WALI…SGVS and VLFG…LMAG.

Belongs to the UPF0391 family.

The protein localises to the cell membrane. This is UPF0391 membrane protein RHECIAT_CH0003936 from Rhizobium etli (strain CIAT 652).